The chain runs to 281 residues: 4-deoxy-L-threo-5-hexosulose-uronate ketol-isomerase (281 aa).

Residues His-198, His-200, Glu-205, and His-248 each coordinate Zn(2+).

It belongs to the KduI family. The cofactor is Zn(2+).

It catalyses the reaction 5-dehydro-4-deoxy-D-glucuronate = 3-deoxy-D-glycero-2,5-hexodiulosonate. It functions in the pathway glycan metabolism; pectin degradation; 2-dehydro-3-deoxy-D-gluconate from pectin: step 4/5. Functionally, catalyzes the isomerization of 5-dehydro-4-deoxy-D-glucuronate to 3-deoxy-D-glycero-2,5-hexodiulosonate. This chain is 4-deoxy-L-threo-5-hexosulose-uronate ketol-isomerase, found in Levilactobacillus brevis (strain ATCC 367 / BCRC 12310 / CIP 105137 / JCM 1170 / LMG 11437 / NCIMB 947 / NCTC 947) (Lactobacillus brevis).